The chain runs to 106 residues: Urease subunit beta (106 aa).

Belongs to the urease beta subunit family. As to quaternary structure, heterotrimer of UreA (gamma), UreB (beta) and UreC (alpha) subunits. Three heterotrimers associate to form the active enzyme. The apoenzyme interacts with an accessory complex composed of UreD, UreF and UreG, which is required for the assembly of the nickel containing metallocenter of UreC. The UreE protein may also play a direct role as a metallochaperone in nickel transfer to the urease apoprotein.

The protein resides in the cytoplasm. It catalyses the reaction urea + 2 H2O + H(+) = hydrogencarbonate + 2 NH4(+). Its pathway is nitrogen metabolism; urea degradation; CO(2) and NH(3) from urea (urease route): step 1/1. With respect to regulation, the apoenzyme can be activated in vitro in the presence of nickel ions and carbon dioxide, which promotes carboxylation of 'Lys-217' of the UreC (alpha) subunit. The chain is Urease subunit beta from Klebsiella aerogenes (Enterobacter aerogenes).